Reading from the N-terminus, the 184-residue chain is MPIQNSPYKAFATLLNSGGHKVSPAELHGLLLGRSCAGAGFDNEGWFADASMLLETEPQDNIRAALVGLQEMVKGELTGDDMTVVLLLPGDDEPLTERAAALGQWCQGFLAGFGLAIGDKVLGSEAKAVLEDLAAIAQVQDALEESEDGETDYMEVMEYMRVAPLLLFTEFNEPAEPQPKPSLH.

Belongs to the UPF0149 family.

This chain is UPF0149 protein PSPTO_5224, found in Pseudomonas syringae pv. tomato (strain ATCC BAA-871 / DC3000).